Here is a 238-residue protein sequence, read N- to C-terminus: Uridylate kinase (238 aa).

Residue 12–15 (KLSG) coordinates ATP. Gly54 contributes to the UMP binding site. Residues Gly55 and Arg59 each contribute to the ATP site. UMP contacts are provided by residues Asp74 and 135 to 142 (TGNPFFTT). The ATP site is built by Thr162, Tyr168, and Asp171.

Belongs to the UMP kinase family. As to quaternary structure, homohexamer.

It is found in the cytoplasm. The catalysed reaction is UMP + ATP = UDP + ADP. The protein operates within pyrimidine metabolism; CTP biosynthesis via de novo pathway; UDP from UMP (UMPK route): step 1/1. Inhibited by UTP. Functionally, catalyzes the reversible phosphorylation of UMP to UDP. This Dechloromonas aromatica (strain RCB) protein is Uridylate kinase.